A 416-amino-acid polypeptide reads, in one-letter code: MSLDYWRNIEGSYPYQTTGNDILTLKEESNPVNLSTLEKQLIGIRRHLHQYPELSKEEFETTAFIKKCLKEKGIQIRPTALKTGVFADIAGESEGPAIALRADIDALPIEEKTGLPYASKHKGIMHACGHDFHTAALLGAAFLLKENQDSLKGKIRLLFQPAEEAGAGATKVIEDGQLDGIDAVIGLHNKPDIAVGTVGLKTGPLMAAVDRFKVEIEGKGAHAALPHNGFDPIIGASQLIVALQTIVSRNVNPLQSAILTVGKINGGSTWNVIPDTVVIEGTVRTFDSEVRNQVKQRFFAVTEQISAAFSLKANVKWHSGPPPLCNDEAITGLVRDAAHKAKLQVIDPAPSTAGEDFAYYLEHIPGSFAFFGTDGDHDWHHPAFTIDETAIIKASYFLYESAKRLLDSNEESKISD.

Positions 128, 130, 164, 188, and 380 each coordinate Zn(2+).

The protein belongs to the peptidase M20 family. The cofactor is Zn(2+). Co(2+) is required as a cofactor.

It catalyses the reaction N-acetyl-L-cysteine + H2O = L-cysteine + acetate. It participates in amino-acid metabolism. Involved in a cysteine salvage pathway from S-alkylcysteine. Catalyzes the last step in this pathway, i.e. the deacetylation of N-acetyl-L-cysteine. This pathway is likely important in the catabolism of alkylated cysteine generated by proteolysis of alkylated glutathione formed in the detoxification of a wide range of electrophiles. The chain is N-acetyl-L-cysteine deacetylase from Bacillus subtilis (strain 168).